The following is a 155-amino-acid chain: Immunoglobulin domain-containing protein oig-4 (155 aa).

The first 22 residues, 1 to 22 (MSFRLWGRCIFFFCFLLEAIDS), serve as a signal peptide directing secretion. N-linked (GlcNAc...) asparagine glycosylation is found at N55 and N114. One can recognise an Ig-like C2-type domain in the interval 73-154 (GYKLLIICKA…MAKNFKAEYT (82 aa)). The cysteines at positions 80 and 136 are disulfide-linked.

In terms of assembly, interacts with the non-alpha subunit of nicotinic acetylcholine receptor unc-29 and lev-10 to stabilize the complex formed between unc-29 and lev-10. In terms of tissue distribution, expressed in body wall muscle cells, the pharyngeal muscle cell pm6 and in four head neurons.

Its subcellular location is the synapse. The protein resides in the secreted. Functionally, required for the localization of acetylcholine receptors at neuromuscular junctions and for subsequently controlling the response evoked by receptor stimulation. In Caenorhabditis elegans, this protein is Immunoglobulin domain-containing protein oig-4.